Consider the following 336-residue polypeptide: Phytochrome A-associated F-box protein (336 aa).

In terms of domain architecture, F-box spans 3-55 (ESVFSCIPEDVVFNIFFKLQDDPRNWARLACVCTKFSSIVRNVCCKTQCYSAI). Positions 197–201 (RKRRK) match the Nuclear localization signal motif.

As to quaternary structure, probable component of an E3 ubiquitin ligase SCF complex. Interacts with SKP1A/ASK1 and SKP1B/ASK2.

The protein resides in the nucleus. The protein operates within protein modification; protein ubiquitination. Functionally, component of SCF(ASK-cullin-F-box) E3 ubiquitin ligase complexes, which may mediate the ubiquitination and subsequent proteasomal degradation of target proteins. Negative regulator of the phyA signaling pathway that shifts the responsiveness of the phyA signaling system associated with hypocotyl elongation from red to far-red wavelength. In Arabidopsis thaliana (Mouse-ear cress), this protein is Phytochrome A-associated F-box protein (EID1).